The chain runs to 267 residues: MFSTNLIQSNYGDLNIKSLAFDSFKERLQSTMTALTFFISTGQCDCDEIAESNFNYMIAYMSNINYDASKPGAPALSFDTYLQDNVKYRVIINNLYGSEIRIRGINKDFIGMDVTSVFRPEKMTNLISIKNRLVIHYLRTIYYEQNYIHPVGSIFAAIQKNESLLKFPSIISMLNINLLFNPLNLPGMGSGVLEDIMSIPDSSLRKRLGYEVLSFSLQAHSLSQECIDKLDIFFADDLFKYESVCIAAMEHLKSKATAPIQNGPLPA.

This is an uncharacterized protein from Escherichia coli (strain K12).